We begin with the raw amino-acid sequence, 400 residues long: Enoyl-[acyl-carrier-protein] reductase [NADH] (400 aa).

NAD(+)-binding positions include 48-53 (GASTGY), 74-75 (FE), 111-112 (DA), and 139-140 (LA). Substrate is bound at residue Y225. Y235 serves as the catalytic Proton donor. Residues K244 and 273-275 (VVT) contribute to the NAD(+) site.

This sequence belongs to the TER reductase family. In terms of assembly, monomer.

The catalysed reaction is a 2,3-saturated acyl-[ACP] + NAD(+) = a (2E)-enoyl-[ACP] + NADH + H(+). Its pathway is lipid metabolism; fatty acid biosynthesis. Involved in the final reduction of the elongation cycle of fatty acid synthesis (FAS II). Catalyzes the reduction of a carbon-carbon double bond in an enoyl moiety that is covalently linked to an acyl carrier protein (ACP). In Burkholderia multivorans (strain ATCC 17616 / 249), this protein is Enoyl-[acyl-carrier-protein] reductase [NADH].